Consider the following 190-residue polypeptide: MEEEGSGCNVPRLPWASILRAALLLLLIGMVIYCFLCGQRFTQQQLDSTGWDLAELLLNHTESRQDPRLRWQGSPALGRSFVHGPELDNGQLRIQRTGIYRLHIQVTLTNCSSSTWTVMPRQATLTLGICSPTTHSISLLRLNFHHTCRVASQRLTPLAKGDVLCTNLTLPLLPSRNADETFFGVQLVRP.

Over 1-17 (MEEEGSGCNVPRLPWAS) the chain is Cytoplasmic. A helical transmembrane segment spans residues 18-38 (ILRAALLLLLIGMVIYCFLCG). Topologically, residues 39 to 190 (QRFTQQQLDS…TFFGVQLVRP (152 aa)) are extracellular. Residues 52 to 188 (DLAELLLNHT…DETFFGVQLV (137 aa)) form the THD domain. Asn-59 and Asn-110 each carry an N-linked (GlcNAc...) asparagine glycan. Disulfide bonds link Cys-111/Cys-148 and Cys-130/Cys-165. The N-linked (GlcNAc...) asparagine glycan is linked to Asn-167.

The protein belongs to the tumor necrosis factor family. As to quaternary structure, homotrimer. N-glycosylated.

It is found in the cell membrane. Its function is as follows. Expressed at the plasma membrane of B cells, it is the ligand of the CD27 receptor which is specifically expressed at the surface of T cells. The CD70-CD27 signaling pathway mediates antigen-specific T cell activation and expansion which in turn provides immune surveillance of B cells. This Sus scrofa (Pig) protein is CD70 antigen.